The primary structure comprises 437 residues: MRQWTAIHLAKLARKASRAVGKRGTDLPGQIARKVDTDILRKLAEQVDDIVFISGTNGKTTTSNLIGHTLKANNIQIIHNNEGANMAAGITSAFIMQSTPKTKIAVIEIDEGSIPRVLKEVTPSMMVFTNFFRDQMDRFGEIDIMVNNIAETISNKGIKLLLNADDPFVSRLKIASDTIVYYGMKAHAHEFEQSTMNESRYCPNCGRLLQYDYIHYNQIGHYHCQCGFKREQAKYEISSFDVAPFLYLNINDEKYDMKIAGDFNAYNALAAYTVLRELGLNEQTIKNGFETYTSDNGRMQYFKKERKEAMINLAKNPAGMNASLSVGEQLEGEKVYVISLNDNAADGRDTSWIYDADFEKLSKQQIEAIIVTGTRAEELQLRLKLAEVEVPIIVERDIYKATAKTMDYKGFTVAIPNYTSLAPMLEQLNRSFEGGQS.

The Zn(2+) site is built by Cys-202, Cys-205, Cys-224, and Cys-226. Asp-349 is an active-site residue.

The protein belongs to the MurCDEF family. MurT subfamily. As to quaternary structure, forms a heterodimer with GatD.

It carries out the reaction beta-D-GlcNAc-(1-&gt;4)-Mur2Ac(oyl-L-Ala-gamma-D-Glu-L-Lys-D-Ala-D-Ala)-di-trans,octa-cis-undecaprenyl diphosphate + L-glutamine + ATP + H2O = beta-D-GlcNAc-(1-&gt;4)-Mur2Ac(oyl-L-Ala-D-isoglutaminyl-L-Lys-D-Ala-D-Ala)-di-trans,octa-cis-undecaprenyl diphosphate + L-glutamate + ADP + phosphate + H(+). The enzyme catalyses beta-D-GlcNAc-(1-&gt;4)-Mur2Ac(oyl-L-Ala-gamma-D-Glu-L-Lys-D-Ala-D-Ala)-di-trans,octa-cis-undecaprenyl diphosphate + ATP = beta-D-GlcNAc-(1-&gt;4)-Mur2Ac(oyl-L-Ala-gamma-D-O-P-Glu-L-Lys-D-Ala-D-Ala)-di-trans,octa-cis-undecaprenyl diphosphate + ADP. The catalysed reaction is beta-D-GlcNAc-(1-&gt;4)-Mur2Ac(oyl-L-Ala-gamma-D-O-P-Glu-L-Lys-D-Ala-D-Ala)-di-trans,octa-cis-undecaprenyl diphosphate + NH4(+) = beta-D-GlcNAc-(1-&gt;4)-Mur2Ac(oyl-L-Ala-D-isoglutaminyl-L-Lys-D-Ala-D-Ala)-di-trans,octa-cis-undecaprenyl diphosphate + phosphate + H(+). It functions in the pathway cell wall biogenesis; peptidoglycan biosynthesis. Functionally, the lipid II isoglutaminyl synthase complex catalyzes the formation of alpha-D-isoglutamine in the cell wall lipid II stem peptide. The MurT subunit catalyzes the ATP-dependent amidation of D-glutamate residue of lipid II, converting it to an isoglutamine residue. This chain is Lipid II isoglutaminyl synthase (glutamine-hydrolyzing) subunit MurT, found in Staphylococcus aureus (strain COL).